The primary structure comprises 461 residues: MGKKAKWFSSVKKAFSPDSKKSKQKLAEGQNGVISNPPVVDNVRQSSSSPPPALAPREVRVAEVIVERNRDLSPPSTADAVNVTATDVPVVPSSSAPGVVRRATPTRFAGKSNEEAAAILIQTIFRGYLARRALRAMRGLVRLKLLMEGSVVKRQAANTLKCMQTLSRVQSQIRARRIRMSEENQARQKQLLQKHAKELAGLKNGDNWNDSIQSKEKVEANLLSKYEATMRRERALAYSYSHQQNWKNNSKSGNPMFMDPSNPTWGWSWLERWMAGRPLESSEKEQSNSNNDNAASVKGSINRNEAAKSLTRNGSTQPNTPSSARGTPRNKNSFFSPPTPSRLNQSSRKSNDDDSKSTISVLSERNRRHSIAGSSVRDDESLAGSPALPSYMVPTKSARARLKPQSPLGGTTQENEGFTDKASAKKRLSYPTSPALPKPRRFSAPPKVESGGVTVTNGAGS.

The disordered stretch occupies residues 1-55; the sequence is MGKKAKWFSSVKKAFSPDSKKSKQKLAEGQNGVISNPPVVDNVRQSSSSPPPALA. The IQ domain maps to 114-142; sequence EEAAAILIQTIFRGYLARRALRAMRGLVR. The calmodulin-binding stretch occupies residues 141–158; that stretch reads VRLKLLMEGSVVKRQAAN. Residues 278–461 are disordered; sequence PLESSEKEQS…GVTVTNGAGS (184 aa). Residues 310–345 show a composition bias toward polar residues; sequence LTRNGSTQPNTPSSARGTPRNKNSFFSPPTPSRLNQ. The Nuclear localization signal signature appears at 425–432; that stretch reads KKRLSYPT.

The protein belongs to the IQD family. As to quaternary structure, binds to multiple calmodulin (CaM) in the presence of Ca(2+) and CaM-like proteins.

The protein resides in the nucleus. It is found in the cytoplasm. Its subcellular location is the cytoskeleton. Its function is as follows. May be involved in cooperative interactions with calmodulins or calmodulin-like proteins. Recruits calmodulin proteins to microtubules, thus being a potential scaffold in cellular signaling and trafficking. May associate with nucleic acids and regulate gene expression at the transcriptional or post-transcriptional level. This is Protein IQ-DOMAIN 2 from Arabidopsis thaliana (Mouse-ear cress).